Consider the following 232-residue polypeptide: Polycomb group RING finger protein 5-B (232 aa).

The RING-type zinc finger occupies 18–57; the sequence is CFVCKGYLIKPTTVTECLHTFCKSCIVQHFEDSNDCPKCG. A compositionally biased stretch (basic and acidic residues) spans 93 to 104; it reads QEDEFWRRKESN. Residues 93 to 128 are disordered; that stretch reads QEDEFWRRKESNDENGPMCKKRRVDEEDDDKGDGDY.

Component of a PRC1-like complex.

The protein localises to the nucleus. Functionally, component of Polycomb group (PcG) multiprotein complexes; the complex class is required to maintain the transcriptionally repressive state of some genes. The protein is Polycomb group RING finger protein 5-B (pcgf5b) of Danio rerio (Zebrafish).